Reading from the N-terminus, the 179-residue chain is MGSEAAQLLEAADFAAHKHRQQRRKDPEGTPYINHPIGVARILTHEAGITDIVVLQAALLHDTVEDTDTTLDEVELHFGAQVRRLVEEVTDDKTLPKLERKRQQVEQAPHSSPGAKLVKLADKLYNLRDLNRCTPTGWSEHRVQEYFEWAAQVVKGLQGTNQQLEEALKQLFEERGLTL.

The residue at position 2 (glycine 2) is an N-acetylglycine. Lysine 25 is subject to N6-acetyllysine. An HD domain is found at 32 to 127 (YINHPIGVAR…VKLADKLYNL (96 aa)). Residues histidine 35, histidine 61, and aspartate 62 each coordinate Mn(2+). Residues glutamate 65 and aspartate 66 each act as nucleophile in the active site. N6-acetyllysine is present on lysine 97. Aspartate 122 contacts Mn(2+). Lysine 123 carries the post-translational modification N6-acetyllysine.

This sequence belongs to the MESH1 family. Requires Mn(2+) as cofactor.

It catalyses the reaction guanosine 3',5'-bis(diphosphate) + H2O = GDP + diphosphate + H(+). In terms of biological role, ppGpp hydrolyzing enzyme involved in starvation response. The sequence is that of Guanosine-3',5'-bis(diphosphate) 3'-pyrophosphohydrolase MESH1 (Hddc3) from Mus musculus (Mouse).